We begin with the raw amino-acid sequence, 715 residues long: ATP-dependent DNA helicase Hel308 (715 aa).

ATP contacts are provided by residues Q35 and 53–60; that span reads SPTGSGKT. Residues 40-203 enclose the Helicase ATP-binding domain; it reads KKGLLDGNRL…WLGAEPVATN (164 aa). Positions 152–155 match the DEAH box motif; it reads DELH. The 207-residue stretch at 236 to 442 folds into the Helicase C-terminal domain; that stretch reads HGDDAIIAYT…ERAFYTFLLG (207 aa).

The protein belongs to the helicase family. Hel308 subfamily. As to quaternary structure, monomer. Interacts with PINA ATPase which decreases both DNA helicase activities of this protein.

It catalyses the reaction Couples ATP hydrolysis with the unwinding of duplex DNA by translocating in the 3'-5' direction.. It carries out the reaction ATP + H2O = ADP + phosphate + H(+). The enzyme catalyses Couples ATP hydrolysis with the unwinding of duplex DNA at the replication fork by translocating in the 5'-3' direction. This creates two antiparallel DNA single strands (ssDNA). The leading ssDNA polymer is the template for DNA polymerase III holoenzyme which synthesizes a continuous strand.. PINA inhibits the (weak) 5'-3' but not the 3'-5' helicase activity of this protein on overhang substrates. Its function is as follows. DNA-dependent ATPase and 3'-5' DNA helicase that may be involved in repair of stalled replication forks. Functionally, has predominantly 3'-5' helicase activity but also a weak 5'-3' helicase activity. Has the ability to unwind replication forks, preferentially removing the lagging strand. Hjc, Hjm (Hel308) and branch migration ATPase PINA coordinate HJ migration and cleavage of replication forks in a coordinated way. The sequence is that of ATP-dependent DNA helicase Hel308 from Saccharolobus islandicus (strain REY15A) (Sulfolobus islandicus).